The sequence spans 504 residues: MDPAAIFLILAIPIASVYLLFYHKKRVNGLSSPPGPRGLPFIGHFYQIYKSECAHEYISNLSKQYGSLMTLHLGSVPALVVSSPKMAQEVLKTQDLVFCSRAQMTGSGKLSYNGLEMAFAPYGEHWRNVRKMCTLELFTQKRAQFNFRPVREDEVSRMVGRLSEAAAASEDVNAYECFTNFATSIISRVAFGKRYDEDNLGKEKFQRMVADIEAMFAAFFVSDFFPMFGWIDRLSGVKAVLDRNFNEMDTFYQELIDEHLKPDRPESLNGDLIDVMLKNKGSFLTMDSIKAILLNVFSGGIGTTGSALVFAMTALLRNQRVMKKAQEEVRSVIGKKEIVDEDDIQKLPYLRAVVKETLRLYPPGPLLIPRVAMESCVLGEDEDHMYMIKPNTIVYVNTWGIGRDPKYWKNPLEFMPERFFERPDLNYTGQQFEYLPFGSGRRICAGIIIGQNNVEVGLANLLYSFDWEPPTGKTFEDIDDQPCNGLTLAKKNPLYIRPKIYVHP.

The chain crosses the membrane as a helical span at residues 3–23 (PAAIFLILAIPIASVYLLFYH). Residues 363–368 (PGPLLI) form a substrate specificity region. Cys-444 contributes to the heme binding site.

Belongs to the cytochrome P450 family. Heme is required as a cofactor.

It is found in the microsome membrane. The enzyme catalyses psoralen + reduced [NADPH--hemoprotein reductase] + O2 = xanthotoxol + oxidized [NADPH--hemoprotein reductase] + H2O + H(+). The catalysed reaction is 6-methoxycoumarin + reduced [NADPH--hemoprotein reductase] + O2 = scopoletin + oxidized [NADPH--hemoprotein reductase] + H2O + H(+). Its pathway is secondary metabolite biosynthesis. Functionally, involved in the biosynthesis of coumarins and furanocoumarins (FCs), natural products required for defense responses against attacks by predators with potential medical and agroindustrial usages such as anticoagulant, rodenticide and artificial vanilla substitutes. Catalyzes the conversion of psoralen into xanthotoxol and of 6-methoxycoumarin into scopoletin. Can also convert with a lower efficiency scopoletin into fraxetin and 7-methoxycoumarin into daphnetin-7-methylether, and use 7-methoxy-3-methylcoumarin as substrate. The sequence is that of Xanthotoxol synthase from Pastinaca sativa (Wild parsnip).